A 500-amino-acid chain; its full sequence is Cobyric acid synthase (500 aa).

The GATase cobBQ-type domain occupies 255 to 444 (AIDIAVIRCP…MHDLFHNDAF (190 aa)). The active-site Nucleophile is C337. Residue H436 is part of the active site.

This sequence belongs to the CobB/CobQ family. CobQ subfamily.

It functions in the pathway cofactor biosynthesis; adenosylcobalamin biosynthesis. Catalyzes amidations at positions B, D, E, and G on adenosylcobyrinic A,C-diamide. NH(2) groups are provided by glutamine, and one molecule of ATP is hydrogenolyzed for each amidation. The polypeptide is Cobyric acid synthase (Geobacillus thermodenitrificans (strain NG80-2)).